The chain runs to 96 residues: Putative pterin-4-alpha-carbinolamine dehydratase (96 aa).

Belongs to the pterin-4-alpha-carbinolamine dehydratase family.

It carries out the reaction (4aS,6R)-4a-hydroxy-L-erythro-5,6,7,8-tetrahydrobiopterin = (6R)-L-erythro-6,7-dihydrobiopterin + H2O. The polypeptide is Putative pterin-4-alpha-carbinolamine dehydratase (Prochlorococcus marinus subsp. pastoris (strain CCMP1986 / NIES-2087 / MED4)).